Consider the following 472-residue polypeptide: uncharacterized protein (472 aa).

Belongs to the AllG family.

This is an uncharacterized protein from Escherichia coli (strain K12).